A 226-amino-acid chain; its full sequence is Uridylate kinase (226 aa).

6–10 (KISGK) is a binding site for ATP. Residue G43 participates in UMP binding. The ATP site is built by G44 and R48. UMP contacts are provided by residues D65 and 113 to 119 (FQPGQST). Positions 139, 140, 145, and 148 each coordinate ATP.

The protein belongs to the UMP kinase family. As to quaternary structure, homohexamer.

It localises to the cytoplasm. It catalyses the reaction UMP + ATP = UDP + ADP. Its pathway is pyrimidine metabolism; CTP biosynthesis via de novo pathway; UDP from UMP (UMPK route): step 1/1. Its activity is regulated as follows. Inhibited by UTP. Functionally, catalyzes the reversible phosphorylation of UMP to UDP. In Sulfurisphaera tokodaii (strain DSM 16993 / JCM 10545 / NBRC 100140 / 7) (Sulfolobus tokodaii), this protein is Uridylate kinase.